The primary structure comprises 515 residues: Integrator complex subunit 14 (515 aa).

The VWFA domain maps to 2–204 (PTVVVMDVSL…KNVQSMFGKL (203 aa)). 3 residues coordinate Mg(2+): serine 10, serine 12, and threonine 86. Lysine 418 is modified (N6-acetyllysine).

This sequence belongs to the Integrator subunit 14 family. Component of the Integrator complex, composed of core subunits INTS1, INTS2, INTS3, INTS4, INTS5, INTS6, INTS7, INTS8, INTS9/RC74, INTS10, INTS11/CPSF3L, INTS12, INTS13, INTS14 and INTS15. The core complex associates with protein phosphatase 2A subunits PPP2CA and PPP2R1A, to form the Integrator-PP2A (INTAC) complex. INTS14 is part of the tail subcomplex, composed of INTS10, INTS13, INTS14 and INTS15.

It is found in the nucleus. Its function is as follows. Component of the integrator complex, a multiprotein complex that terminates RNA polymerase II (Pol II) transcription in the promoter-proximal region of genes. The integrator complex provides a quality checkpoint during transcription elongation by driving premature transcription termination of transcripts that are unfavorably configured for transcriptional elongation: the complex terminates transcription by (1) catalyzing dephosphorylation of the C-terminal domain (CTD) of Pol II subunit POLR2A/RPB1 and SUPT5H/SPT5, (2) degrading the exiting nascent RNA transcript via endonuclease activity and (3) promoting the release of Pol II from bound DNA. The integrator complex is also involved in terminating the synthesis of non-coding Pol II transcripts, such as enhancer RNAs (eRNAs), small nuclear RNAs (snRNAs), telomerase RNAs and long non-coding RNAs (lncRNAs). Within the integrator complex, INTS14 is part of the integrator tail module that acts as a platform for the recruitment of transcription factors at promoters. The sequence is that of Integrator complex subunit 14 from Rattus norvegicus (Rat).